A 311-amino-acid chain; its full sequence is Probable cysteine synthase (311 aa).

The residue at position 45 (K45) is an N6-(pyridoxal phosphate)lysine. Residues N75, 182-186, and S270 contribute to the pyridoxal 5'-phosphate site; that span reads GTGGT.

The protein belongs to the cysteine synthase/cystathionine beta-synthase family. Requires pyridoxal 5'-phosphate as cofactor.

It carries out the reaction O-acetyl-L-serine + hydrogen sulfide = L-cysteine + acetate. It functions in the pathway amino-acid biosynthesis; L-cysteine biosynthesis; L-cysteine from L-serine: step 2/2. The polypeptide is Probable cysteine synthase (ytkP) (Bacillus subtilis (strain 168)).